The sequence spans 341 residues: Probable long-chain-alcohol O-fatty-acyltransferase 9 (341 aa).

Transmembrane regions (helical) follow at residues isoleucine 9–isoleucine 29, leucine 36–valine 56, glycine 82–isoleucine 102, phenylalanine 122–leucine 142, valine 146–leucine 166, methionine 231–isoleucine 251, and arginine 295–isoleucine 315.

The protein belongs to the wax synthase family.

The protein resides in the membrane. It carries out the reaction a long chain fatty alcohol + a fatty acyl-CoA = a wax ester + CoA. Catalyzes the final step in the synthesis of long-chain linear esters (waxes). This Arabidopsis thaliana (Mouse-ear cress) protein is Probable long-chain-alcohol O-fatty-acyltransferase 9.